Reading from the N-terminus, the 391-residue chain is Oxygen-dependent coproporphyrinogen-III oxidase, chloroplastic (391 aa).

Residues 1–13 show a composition bias toward polar residues; the sequence is MASSLLTTPSQTL. The interval 1–34 is disordered; sequence MASSLLTTPSQTLAPNPAAARARRSSPAAAQVSF. The span at 14–30 shows a compositional bias: low complexity; sequence APNPAAARARRSSPAAA. Positions 125-134 are important for dimerization; the sequence is VLQDGNVFEK. A substrate-binding site is contributed by serine 179. Histidine 193 functions as the Proton donor in the catalytic mechanism. Residues 195 to 197 and 349 to 354 each bind substrate; these read NYR and GGRIES. Positions 331–366 are important for dimerization; it reads YVEFNLVYDRGTTFGLKTGGRIESILVSLPLTARWE.

Belongs to the aerobic coproporphyrinogen-III oxidase family. As to quaternary structure, homodimer.

Its subcellular location is the plastid. It is found in the chloroplast. It carries out the reaction coproporphyrinogen III + O2 + 2 H(+) = protoporphyrinogen IX + 2 CO2 + 2 H2O. Its pathway is porphyrin-containing compound metabolism; protoporphyrin-IX biosynthesis; protoporphyrinogen-IX from coproporphyrinogen-III (O2 route): step 1/1. Involved in the heme and chlorophyll biosynthesis. Catalyzes the aerobic oxidative decarboxylation of propionate groups of rings A and B of coproporphyrinogen-III to yield the vinyl groups in protoporphyrinogen-IX. The protein is Oxygen-dependent coproporphyrinogen-III oxidase, chloroplastic (CPX) of Hordeum vulgare (Barley).